The chain runs to 919 residues: TRPM8 channel-associated factor 2 (919 aa).

Positions 542 to 841 (DCWVSTGLYL…TYLQLQEAFG (300 aa)) constitute a Peptidase M60 domain.

The protein belongs to the TCAF family. Isoform 2 interacts with TRPM8 (via N-terminus and C-terminus domains); the interaction inhibits TRPM8 channel activity. Interacts with TRPV6. In terms of tissue distribution, isoform 2 is expressed in the prostate and in cancerous prostate samples.

Its subcellular location is the cell membrane. Functionally, negatively regulates the plasma membrane cation channel TRPM8 activity. Involved in the recruitment of TRPM8 to the cell surface. Promotes prostate cancer cell migration stimulation in a TRPM8-dependent manner. The protein is TRPM8 channel-associated factor 2 of Homo sapiens (Human).